A 78-amino-acid polypeptide reads, in one-letter code: RNA-binding protein KhpA (78 aa).

The region spanning 29–78 (TIIYELTVAKGDIGKIIGKEGRTIKAIRTLLVSVASRDNVKVSLEIMEER) is the KH domain.

This sequence belongs to the KhpA RNA-binding protein family.

Its subcellular location is the cytoplasm. Its function is as follows. A probable RNA-binding protein. This Chlamydia trachomatis serovar D (strain ATCC VR-885 / DSM 19411 / UW-3/Cx) protein is RNA-binding protein KhpA.